Consider the following 178-residue polypeptide: Large ribosomal subunit protein uL13m (178 aa).

Serine 2 is subject to N-acetylserine.

Belongs to the universal ribosomal protein uL13 family. Component of the mitochondrial large ribosomal subunit (mt-LSU). Mature mammalian 55S mitochondrial ribosomes consist of a small (28S) and a large (39S) subunit. The 28S small subunit contains a 12S ribosomal RNA (12S mt-rRNA) and 30 different proteins. The 39S large subunit contains a 16S rRNA (16S mt-rRNA), a copy of mitochondrial valine transfer RNA (mt-tRNA(Val)), which plays an integral structural role, and 52 different proteins. Interacts with OXA1L.

The protein localises to the mitochondrion. In Homo sapiens (Human), this protein is Large ribosomal subunit protein uL13m (MRPL13).